A 946-amino-acid chain; its full sequence is C-1-tetrahydrofolate synthase, cytoplasmic (946 aa).

The methylenetetrahydrofolate dehydrogenase and cyclohydrolase stretch occupies residues 2 to 319 (AGQVLDGKAC…PPLPLKLLTP (318 aa)). Substrate-binding positions include 51-55 (YVRMK) and 98-100 (VQL). Residue 169–171 (GRS) coordinates NADP(+). Ser176 is subject to Phosphoserine. Position 194 (Ser194) interacts with NADP(+). A substrate-binding site is contributed by 277-281 (PGGVG). Thr318 is modified (phosphothreonine). The formyltetrahydrofolate synthetase stretch occupies residues 320-946 (VPSDIDISRA…DDDGEIDGLF (627 aa)). Residue Ser322 is modified to Phosphoserine. Residue 384–391 (TPLGEGKS) coordinates ATP.

In the N-terminal section; belongs to the tetrahydrofolate dehydrogenase/cyclohydrolase family. It in the C-terminal section; belongs to the formate--tetrahydrofolate ligase family. In terms of assembly, homodimer.

It is found in the cytoplasm. Its subcellular location is the nucleus. It carries out the reaction (6R)-5,10-methylene-5,6,7,8-tetrahydrofolate + NADP(+) = (6R)-5,10-methenyltetrahydrofolate + NADPH. The catalysed reaction is (6R)-5,10-methenyltetrahydrofolate + H2O = (6R)-10-formyltetrahydrofolate + H(+). It catalyses the reaction (6S)-5,6,7,8-tetrahydrofolate + formate + ATP = (6R)-10-formyltetrahydrofolate + ADP + phosphate. The protein operates within one-carbon metabolism; tetrahydrofolate interconversion. Cytoplasmic isozyme of C-1-tetrahydrofolate synthase. The trifunctional enzyme catalyzes the interconversion of the one-carbon derivatives of tetrahydrofolate (THF) between different oxidation states by the enzymatic activities 10-formyltetrahydrofolate synthetase, 5,lO-methenyltetrahydrofolate cyclohydrolase, and 5,lO-methylenetetrahydrofolate dehydrogenase. Involved in the generation of one-carbon intermediates in the biosynthesis of the purine bases. The sequence is that of C-1-tetrahydrofolate synthase, cytoplasmic (ADE3) from Saccharomyces cerevisiae (strain ATCC 204508 / S288c) (Baker's yeast).